We begin with the raw amino-acid sequence, 360 residues long: Carbamoyl phosphate synthase small chain (360 aa).

A CPSase region spans residues 1–169; the sequence is MTKRLLILED…TKTAYPAPGI (169 aa). Positions 46, 220, and 222 each coordinate L-glutamine. Residues 172–358 enclose the Glutamine amidotransferase type-1 domain; the sequence is NIVLVDFGLK…LEMIDSWRCT (187 aa). Cysteine 247 serves as the catalytic Nucleophile. Residues methionine 248, glutamine 251, asparagine 289, glycine 291, and tyrosine 292 each contribute to the L-glutamine site. Catalysis depends on residues histidine 331 and aspartate 333.

This sequence belongs to the CarA family. In terms of assembly, composed of two chains; the small (or glutamine) chain promotes the hydrolysis of glutamine to ammonia, which is used by the large (or ammonia) chain to synthesize carbamoyl phosphate. Tetramer of heterodimers (alpha,beta)4.

It catalyses the reaction hydrogencarbonate + L-glutamine + 2 ATP + H2O = carbamoyl phosphate + L-glutamate + 2 ADP + phosphate + 2 H(+). The catalysed reaction is L-glutamine + H2O = L-glutamate + NH4(+). The protein operates within amino-acid biosynthesis; L-arginine biosynthesis; carbamoyl phosphate from bicarbonate: step 1/1. It participates in pyrimidine metabolism; UMP biosynthesis via de novo pathway; (S)-dihydroorotate from bicarbonate: step 1/3. Functionally, small subunit of the glutamine-dependent carbamoyl phosphate synthetase (CPSase). CPSase catalyzes the formation of carbamoyl phosphate from the ammonia moiety of glutamine, carbonate, and phosphate donated by ATP, constituting the first step of 2 biosynthetic pathways, one leading to arginine and/or urea and the other to pyrimidine nucleotides. The small subunit (glutamine amidotransferase) binds and cleaves glutamine to supply the large subunit with the substrate ammonia. This chain is Carbamoyl phosphate synthase small chain, found in Streptococcus pyogenes serotype M3 (strain SSI-1).